A 195-amino-acid polypeptide reads, in one-letter code: Oocyte-secreted protein 3 (195 aa).

Positions 1-21 are cleaved as a signal peptide; the sequence is MKAFVASGLLLLIFGMWRCSG. Residue Asn102 is glycosylated (N-linked (GlcNAc...) asparagine).

Belongs to the PLAC1 family. Oocyte-specific.

Its subcellular location is the secreted. The chain is Oocyte-secreted protein 3 from Mus musculus (Mouse).